Reading from the N-terminus, the 765-residue chain is Beta-glucosidase cel3A (765 aa).

A signal peptide spans 1–24 (MRWSSPTSSSLSLVALLLVAHVDA). N-linked (GlcNAc...) asparagine glycosylation is found at Asn-66, Asn-124, Asn-250, Asn-304, Asn-311, Asn-349, Asn-549, Asn-588, Asn-657, and Asn-681.

This sequence belongs to the glycosyl hydrolase 3 family.

It localises to the secreted. It carries out the reaction Hydrolysis of terminal, non-reducing beta-D-glucosyl residues with release of beta-D-glucose.. The protein operates within glycan metabolism; cellulose degradation. Functionally, beta-glucosidases are one of a number of cellulolytic enzymes involved in the degradation of cellulosic biomass. Catalyzes the last step releasing glucose from the inhibitory cellobiose. Shows higher activities on cellobiose and cellotriose but lower activities on laminarioligosaccharides and polymers. This is Beta-glucosidase cel3A from Pyricularia oryzae (strain 70-15 / ATCC MYA-4617 / FGSC 8958) (Rice blast fungus).